We begin with the raw amino-acid sequence, 138 residues long: ATP synthase epsilon chain (138 aa).

It belongs to the ATPase epsilon chain family. As to quaternary structure, F-type ATPases have 2 components, CF(1) - the catalytic core - and CF(0) - the membrane proton channel. CF(1) has five subunits: alpha(3), beta(3), gamma(1), delta(1), epsilon(1). CF(0) has three main subunits: a, b and c.

Its subcellular location is the cell membrane. Functionally, produces ATP from ADP in the presence of a proton gradient across the membrane. This is ATP synthase epsilon chain from Streptococcus gordonii (strain Challis / ATCC 35105 / BCRC 15272 / CH1 / DL1 / V288).